The following is a 447-amino-acid chain: Argininosuccinate synthase (447 aa).

Residues A17–S25 and A43 contribute to the ATP site. Position 99 (Y99) interacts with L-citrulline. ATP contacts are provided by G129 and T131. L-aspartate-binding residues include T131, N135, and D136. N135 is an L-citrulline binding site. Position 136 (D136) interacts with ATP. 2 residues coordinate L-citrulline: R139 and S192. D194 lines the ATP pocket. Residues T201, E203, and E280 each contribute to the L-citrulline site.

It belongs to the argininosuccinate synthase family. Type 2 subfamily. As to quaternary structure, homotetramer.

The protein resides in the cytoplasm. It carries out the reaction L-citrulline + L-aspartate + ATP = 2-(N(omega)-L-arginino)succinate + AMP + diphosphate + H(+). It functions in the pathway amino-acid biosynthesis; L-arginine biosynthesis; L-arginine from L-ornithine and carbamoyl phosphate: step 2/3. The protein is Argininosuccinate synthase of Shigella boydii serotype 18 (strain CDC 3083-94 / BS512).